Here is a 777-residue protein sequence, read N- to C-terminus: Endonuclease MutS2 (777 aa).

Gly-328–Thr-335 is a binding site for ATP. In terms of domain architecture, Smr spans Leu-702–Lys-777.

Belongs to the DNA mismatch repair MutS family. MutS2 subfamily. Homodimer. Binds to stalled ribosomes, contacting rRNA.

Functionally, endonuclease that is involved in the suppression of homologous recombination and thus may have a key role in the control of bacterial genetic diversity. Its function is as follows. Acts as a ribosome collision sensor, splitting the ribosome into its 2 subunits. Detects stalled/collided 70S ribosomes which it binds and splits by an ATP-hydrolysis driven conformational change. Acts upstream of the ribosome quality control system (RQC), a ribosome-associated complex that mediates the extraction of incompletely synthesized nascent chains from stalled ribosomes and their subsequent degradation. Probably generates substrates for RQC. This Streptococcus sanguinis (strain SK36) protein is Endonuclease MutS2.